Consider the following 59-residue polypeptide: UPF0434 protein PBPRA2383 (59 aa).

It belongs to the UPF0434 family.

In Photobacterium profundum (strain SS9), this protein is UPF0434 protein PBPRA2383.